The sequence spans 175 residues: Riboflavin kinase (175 aa).

54 to 59 is a binding site for CDP; the sequence is GLGEGK. Mg(2+) contacts are provided by Thr83 and Asn85. FMN-binding residues include Thr142 and Glu150. 155-158 serves as a coordination point for CDP; it reads FHLR.

This sequence belongs to the archaeal riboflavin kinase family. It depends on Mg(2+) as a cofactor.

It catalyses the reaction riboflavin + CTP = CDP + FMN + H(+). It functions in the pathway cofactor biosynthesis; FMN biosynthesis; FMN from riboflavin (CTP route): step 1/1. Its function is as follows. Catalyzes the CTP-dependent phosphorylation of riboflavin (vitamin B2) to form flavin mononucleotide (FMN). The polypeptide is Riboflavin kinase (Saccharolobus solfataricus (strain ATCC 35092 / DSM 1617 / JCM 11322 / P2) (Sulfolobus solfataricus)).